A 739-amino-acid polypeptide reads, in one-letter code: Lysine decarboxylase (739 aa).

Lysine 367 is subject to N6-(pyridoxal phosphate)lysine. Positions 714 to 726 (ADEPGDKPSDTVK) are enriched in basic and acidic residues. The tract at residues 714–739 (ADEPGDKPSDTVKKAPGKKPSAAKKS) is disordered. Basic residues predominate over residues 728–739 (APGKKPSAAKKS).

It belongs to the Orn/Lys/Arg decarboxylase class-I family. It depends on pyridoxal 5'-phosphate as a cofactor.

The protein localises to the cytoplasm. The enzyme catalyses L-lysine + H(+) = cadaverine + CO2. This Hafnia alvei protein is Lysine decarboxylase.